We begin with the raw amino-acid sequence, 348 residues long: D-erythrose-4-phosphate dehydrogenase (348 aa).

NAD(+) contacts are provided by residues 12 to 13 and Arg81; that span reads RI. Residues 154–156, Arg200, 213–214, and Arg236 each bind substrate; these read SCT and TK. Residue Cys155 is the Nucleophile of the active site. An NAD(+)-binding site is contributed by Asn318.

This sequence belongs to the glyceraldehyde-3-phosphate dehydrogenase family. Epd subfamily. As to quaternary structure, homotetramer.

The protein resides in the cytoplasm. The catalysed reaction is D-erythrose 4-phosphate + NAD(+) + H2O = 4-phospho-D-erythronate + NADH + 2 H(+). It functions in the pathway cofactor biosynthesis; pyridoxine 5'-phosphate biosynthesis; pyridoxine 5'-phosphate from D-erythrose 4-phosphate: step 1/5. Functionally, catalyzes the NAD-dependent conversion of D-erythrose 4-phosphate to 4-phosphoerythronate. In Salmonella agona (strain SL483), this protein is D-erythrose-4-phosphate dehydrogenase.